A 336-amino-acid chain; its full sequence is Alcohol dehydrogenase, propanol-preferring (336 aa).

Zn(2+)-binding residues include Cys-37, His-58, Cys-89, Cys-92, Cys-95, Cys-103, and Cys-145.

It belongs to the zinc-containing alcohol dehydrogenase family. Requires Zn(2+) as cofactor.

The enzyme catalyses a primary alcohol + NAD(+) = an aldehyde + NADH + H(+). It carries out the reaction a secondary alcohol + NAD(+) = a ketone + NADH + H(+). Its function is as follows. Preferred specificity is towards 1-propanol. The polypeptide is Alcohol dehydrogenase, propanol-preferring (adhP) (Escherichia coli (strain K12)).